The chain runs to 137 residues: Protein BNS1 (137 aa).

In terms of biological role, component of the FEAR (CDC14 early anaphase release) network which promotes CDC14 release from the nucleolus during early anaphase and is required for the efficient segregation of telomeric and nucleolar regions. Although BNS1 can partially compensate for a lack of SPO12 function when overexpressed, it does not appear to play any role in controlling meiotic nuclear division. The sequence is that of Protein BNS1 (BNS1) from Saccharomyces cerevisiae (strain ATCC 204508 / S288c) (Baker's yeast).